The primary structure comprises 960 residues: ATPase 4, plasma membrane-type (960 aa).

The Cytoplasmic portion of the chain corresponds to 1-69; the sequence is MTTTVEDNRE…EKKESKFLKF (69 aa). Residues 70-89 form a helical membrane-spanning segment; sequence LGFMWNPLSWVMEAAAIMAI. Over 90–101 the chain is Extracellular; the sequence is ALANGGGKPPDW. Residues 102–122 form a helical membrane-spanning segment; it reads QDFVGIITLLVINSTISFIEE. At 123–251 the chain is on the cytoplasmic side; it reads NNAGNAAAAL…GHFQQVLTAI (129 aa). A helical transmembrane segment spans residues 252 to 272; sequence GNFCICSIAVGMLIEIVVMYP. Residues 273–281 lie on the Extracellular side of the membrane; it reads IQHRAYRPG. The helical transmembrane segment at 282 to 299 threads the bilayer; the sequence is IDNLLVLLIGGIPIAMPT. Over 300–651 the chain is Cytoplasmic; it reads VLSVTMAIGS…TSRAIFQRMK (352 aa). The 4-aspartylphosphate intermediate role is filled by D337. D596 and D600 together coordinate Mg(2+). Residues 652 to 673 traverse the membrane as a helical segment; that stretch reads NYTIYAVSITIRIVLGFMLLAL. Residues 674–678 lie on the Extracellular side of the membrane; sequence IWQFD. A helical membrane pass occupies residues 679–701; sequence FPPFMVLIIAILNDGTIMTISKD. Residues 702-717 are Cytoplasmic-facing; that stretch reads RVKPSPLPDSWKLSEI. The chain crosses the membrane as a helical span at residues 718–738; it reads FATGVVFGSYMAMMTVIFFWV. Residues 739 to 763 are Extracellular-facing; the sequence is SYKTDFFPRTFGVATLEKTAHDDFR. The helical transmembrane segment at 764–784 threads the bilayer; the sequence is KLASAIYLQVSIISQALIFVT. Residues 785–796 lie on the Cytoplasmic side of the membrane; it reads RSRSWSFVERPG. A helical transmembrane segment spans residues 797–817; that stretch reads IFLMIAFILAQLVATLIAVYA. At 818–825 the chain is on the extracellular side; the sequence is NWSFAAIE. Residues 826–846 form a helical membrane-spanning segment; it reads GIGWGWAGVIWLYNIIFYIPL. Residues 847–960 lie on the Cytoplasmic side of the membrane; the sequence is DFIKFFIRYA…IETIQQAYTV (114 aa). T893 is subject to Phosphothreonine. At S942 the chain carries Phosphoserine. Positions 958–960 are interaction with 14-3-3 proteins; the sequence is YTV. A Phosphothreonine modification is found at T959.

The protein belongs to the cation transport ATPase (P-type) (TC 3.A.3) family. Type IIIA subfamily. In terms of assembly, binds to 14-3-3 proteins. The binding is induced by phosphorylation of Thr-959. Binding to 14-3-3 proteins activates the H(+)-ATPase. As to expression, expressed in guard cells and roots.

The protein resides in the cell membrane. The catalysed reaction is ATP + H2O + H(+)(in) = ADP + phosphate + 2 H(+)(out). Functionally, the plasma membrane H(+) ATPase of plants and fungi generates a proton gradient that drives the active transport of nutrients by H(+)-symport. The resulting external acidification and/or internal alkinization may mediate growth responses. The protein is ATPase 4, plasma membrane-type (AHA4) of Arabidopsis thaliana (Mouse-ear cress).